Here is a 570-residue protein sequence, read N- to C-terminus: Sulfite reductase [NADPH] hemoprotein beta-component (570 aa).

[4Fe-4S] cluster-binding residues include Cys-434, Cys-440, Cys-479, and Cys-483. Cys-483 serves as a coordination point for siroheme.

This sequence belongs to the nitrite and sulfite reductase 4Fe-4S domain family. Alpha(8)-beta(8). The alpha component is a flavoprotein, the beta component is a hemoprotein. Siroheme serves as cofactor. The cofactor is [4Fe-4S] cluster.

It catalyses the reaction hydrogen sulfide + 3 NADP(+) + 3 H2O = sulfite + 3 NADPH + 4 H(+). It functions in the pathway sulfur metabolism; hydrogen sulfide biosynthesis; hydrogen sulfide from sulfite (NADPH route): step 1/1. In terms of biological role, component of the sulfite reductase complex that catalyzes the 6-electron reduction of sulfite to sulfide. This is one of several activities required for the biosynthesis of L-cysteine from sulfate. The polypeptide is Sulfite reductase [NADPH] hemoprotein beta-component (Salmonella typhi).